The primary structure comprises 516 residues: AMP phosphorylase (516 aa).

Residues Gly169, 195–200 (SRAITG), and Thr204 each bind AMP. The active-site Proton donor is Asp257. 2 residues coordinate AMP: Ser265 and Lys289.

The protein belongs to the thymidine/pyrimidine-nucleoside phosphorylase family. Type 2 subfamily.

The enzyme catalyses AMP + phosphate = alpha-D-ribose 1,5-bisphosphate + adenine. The catalysed reaction is CMP + phosphate = cytosine + alpha-D-ribose 1,5-bisphosphate. It carries out the reaction UMP + phosphate = alpha-D-ribose 1,5-bisphosphate + uracil. Its function is as follows. Catalyzes the conversion of AMP and phosphate to adenine and ribose 1,5-bisphosphate (R15P). Exhibits phosphorylase activity toward CMP and UMP in addition to AMP. Functions in an archaeal AMP degradation pathway, together with R15P isomerase and RubisCO. The sequence is that of AMP phosphorylase from Methanospirillum hungatei JF-1 (strain ATCC 27890 / DSM 864 / NBRC 100397 / JF-1).